The chain runs to 57 residues: UPF0391 membrane protein RPB_2024 (57 aa).

2 helical membrane passes run 4–24 and 30–50; these read WVVT…GGIA and IAKV…VVGL.

This sequence belongs to the UPF0391 family.

It is found in the cell membrane. The sequence is that of UPF0391 membrane protein RPB_2024 from Rhodopseudomonas palustris (strain HaA2).